A 143-amino-acid polypeptide reads, in one-letter code: uncharacterized protein (143 aa).

Residues 24 to 78 (IRQRREWQNMSQTTLGEAIGVTFQQVQKYEKGVNRVGAGRLQQISKALKVEPSYF) enclose the HTH cro/C1-type domain. A DNA-binding region (H-T-H motif) is located at residues 35–54 (QTTLGEAIGVTFQQVQKYEK).

This is an uncharacterized protein from Sinorhizobium fredii (strain NBRC 101917 / NGR234).